Here is a 246-residue protein sequence, read N- to C-terminus: Large ribosomal subunit protein uL3 (246 aa).

The disordered stretch occupies residues 140-162 (SHRSIGSTGGRQDPGKTFKNKKM). An N5-methylglutamine modification is found at Gln151.

Belongs to the universal ribosomal protein uL3 family. As to quaternary structure, part of the 50S ribosomal subunit. Forms a cluster with proteins L14 and L19. Methylated by PrmB.

One of the primary rRNA binding proteins, it binds directly near the 3'-end of the 23S rRNA, where it nucleates assembly of the 50S subunit. This Methylobacterium sp. (strain 4-46) protein is Large ribosomal subunit protein uL3.